A 447-amino-acid chain; its full sequence is Dihydrolipoyllysine-residue acetyltransferase component of pyruvate dehydrogenase complex (447 aa).

The 77-residue stretch at Pro2–Ala78 folds into the Lipoyl-binding domain. Lys43 bears the N6-lipoyllysine mark. Residues Gly91–Arg140 form a disordered region. A compositionally biased stretch (low complexity) spans Glu108–Ala134. The 38-residue stretch at Phe142–Val179 folds into the Peripheral subunit-binding (PSBD) domain. The active site involves His420.

This sequence belongs to the 2-oxoacid dehydrogenase family. Forms a 24-polypeptide structural core with octahedral symmetry. Requires (R)-lipoate as cofactor.

It carries out the reaction N(6)-[(R)-dihydrolipoyl]-L-lysyl-[protein] + acetyl-CoA = N(6)-[(R)-S(8)-acetyldihydrolipoyl]-L-lysyl-[protein] + CoA. Functionally, the pyruvate dehydrogenase complex catalyzes the overall conversion of pyruvate to acetyl-CoA and CO(2). It contains multiple copies of three enzymatic components: pyruvate dehydrogenase (E1), dihydrolipoamide acetyltransferase (E2) and lipoamide dehydrogenase (E3). In Rhizobium meliloti (strain 1021) (Ensifer meliloti), this protein is Dihydrolipoyllysine-residue acetyltransferase component of pyruvate dehydrogenase complex (pdhC).